A 304-amino-acid chain; its full sequence is Recombination-associated protein RdgC (304 aa).

The protein belongs to the RdgC family.

The protein resides in the cytoplasm. It localises to the nucleoid. In terms of biological role, may be involved in recombination. In Shewanella putrefaciens (strain CN-32 / ATCC BAA-453), this protein is Recombination-associated protein RdgC.